The primary structure comprises 468 residues: ATP synthase subunit beta (468 aa).

155–162 serves as a coordination point for ATP; it reads GGAGVGKT.

It belongs to the ATPase alpha/beta chains family. F-type ATPases have 2 components, CF(1) - the catalytic core - and CF(0) - the membrane proton channel. CF(1) has five subunits: alpha(3), beta(3), gamma(1), delta(1), epsilon(1). CF(0) has three main subunits: a(1), b(2) and c(9-12). The alpha and beta chains form an alternating ring which encloses part of the gamma chain. CF(1) is attached to CF(0) by a central stalk formed by the gamma and epsilon chains, while a peripheral stalk is formed by the delta and b chains.

The protein localises to the cell membrane. The catalysed reaction is ATP + H2O + 4 H(+)(in) = ADP + phosphate + 5 H(+)(out). Functionally, produces ATP from ADP in the presence of a proton gradient across the membrane. The catalytic sites are hosted primarily by the beta subunits. This is ATP synthase subunit beta from Enterococcus hirae (strain ATCC 9790 / DSM 20160 / JCM 8729 / LMG 6399 / NBRC 3181 / NCIMB 6459 / NCDO 1258 / NCTC 12367 / WDCM 00089 / R).